Here is a 298-residue protein sequence, read N- to C-terminus: MDVSNENANSSIMTMEANFFMCIIVVFTQVRPVNNPESSAYLFSGFCRHTHKNACFFSFDFFQLVFDASSFAIPATLFYKYTKVTNINMKNITKNQIRMILLSSYLLSLIVGVIYVITYEPDESLEVASETRKFHSTQYDFRYYADITGYQKHFWSWLATNLNMISIFVPPIMSIVFIRLIQIKLNSLKHLFTDKTAAQAKKFDLALTIQTLVPAVCVIPIYIAHLILENYDLPFLSNFEKVLYMMLSLPTAIDAFIVIVTITPYQKAFIAFFKDTFCGKKVSPAIVRRNNISAVSIF.

6 helical membrane passes run 10-30, 54-74, 99-119, 158-178, 207-227, and 242-262; these read SSIM…FTQV, ACFF…FAIP, MILL…VITY, LATN…IVFI, LTIQ…AHLI, and VLYM…IVTI.

The protein belongs to the nematode receptor-like protein srd family.

The protein resides in the membrane. The polypeptide is Serpentine receptor class delta-34 (srd-34) (Caenorhabditis elegans).